A 142-amino-acid chain; its full sequence is Myosin-2 essential light chain (142 aa).

2 EF-hand domains span residues 2–37 (DDLA…LGQN) and 75–110 (HTVE…LGER).

In terms of assembly, myosin is a hexamer of 2 heavy chains and 4 light chains (two regulatory light chains and two essential light chains).

Its subcellular location is the cytoplasm. It localises to the cytoskeleton. In terms of biological role, required for cytokinesis and embryo elongation. May regulate myosin II complex formation and/or the association of myosin with actin. May be involved in the organization of mlc-4 and nmy-2 into bundles. The protein is Myosin-2 essential light chain of Caenorhabditis elegans.